Consider the following 291-residue polypeptide: ATP synthase gamma chain (291 aa).

The protein belongs to the ATPase gamma chain family. As to quaternary structure, F-type ATPases have 2 components, CF(1) - the catalytic core - and CF(0) - the membrane proton channel. CF(1) has five subunits: alpha(3), beta(3), gamma(1), delta(1), epsilon(1). CF(0) has three main subunits: a, b and c.

It is found in the cell inner membrane. Its function is as follows. Produces ATP from ADP in the presence of a proton gradient across the membrane. The gamma chain is believed to be important in regulating ATPase activity and the flow of protons through the CF(0) complex. The protein is ATP synthase gamma chain of Neisseria meningitidis serogroup C / serotype 2a (strain ATCC 700532 / DSM 15464 / FAM18).